The sequence spans 264 residues: Galectin-3 (264 aa).

The interval 1–105 (MADSFSLNDA…GAFPGQPGAP (105 aa)) is disordered. The residue at position 2 (Ala2) is an N-acetylalanine. The residue at position 6 (Ser6) is a Phosphoserine; by CK1. 8 tandem repeats follow at residues 35–43 (YPGAAYPGA), 44–52 (YPGQAPPGA), 53–61 (YPGQAPPGA), 62–70 (YPGQAPPSA), 71–79 (YPGPTAPGA), 80–88 (YPGPTAPGA), 89–97 (YPGQPAPGA), and 98–107 (FPGQPGAPGA). The 9 X 9 AA tandem repeats of Y-P-G-X(3)-P-[GS]-A stretch occupies residues 35-114 (YPGAAYPGAY…PGAYPQCSGG (80 aa)). Residues 37 to 46 (GAAYPGAYPG) show a composition bias toward low complexity. Pro residues predominate over residues 47 to 75 (QAPPGAYPGQAPPGAYPGQAPPSAYPGPT). Low complexity predominate over residues 76 to 105 (APGAYPGPTAPGAYPGQPAPGAFPGQPGAP). A 9; truncated repeat occupies 108–114 (YPQCSGG). In terms of domain architecture, Galectin spans 132-262 (YDLPLPGGVM…DITLTSANHA (131 aa)). 195–201 (WGKEERQ) contacts a beta-D-galactoside. The residue at position 202 (Ser202) is a Phosphoserine. The Nuclear export signal motif lies at 240–255 (KNLREISQLGISGDIT).

Probably forms homo- or heterodimers. Interacts with DMBT1. Interacts with CD6 and ALCAM. Forms a complex with the ITGA3, ITGB1 and CSPG4. Interacts with LGALS3BP, LYPD3, ZFTRAF1 and UACA. Interacts with TRIM16; this interaction mediates autophagy of damage endomembranes. Interacts with and inhibits by binding NCR3/NKp30. The highest levels are found in activated macrophages.

It is found in the cytoplasm. The protein localises to the nucleus. The protein resides in the secreted. In terms of biological role, galactose-specific lectin which binds IgE. May mediate with the alpha-3, beta-1 integrin the stimulation by CSPG4 of endothelial cells migration. Together with DMBT1, required for terminal differentiation of columnar epithelial cells during early embryogenesis. In the nucleus: acts as a pre-mRNA splicing factor. Involved in acute inflammatory responses including neutrophil activation and adhesion, chemoattraction of monocytes macrophages, opsonization of apoptotic neutrophils, and activation of mast cells. Together with TRIM16, coordinates the recognition of membrane damage with mobilization of the core autophagy regulators ATG16L1 and BECN1 in response to damaged endomembranes. When secreted, interacts with NK cell-activating receptor NCR3/NKp30 acting as an inhibitory ligand which antagonizes NK cell attack. This is Galectin-3 (Lgals3) from Mus musculus (Mouse).